The following is a 340-amino-acid chain: Homeobox protein DBX2 (340 aa).

The segment at residues 185-244 is a DNA-binding region (homeobox); that stretch reads GILRRAVFSEDQRKALEKMFQKQKYISKTDRKKLAINLGLKESQVKIWFQNRRMKWRNSK. The interval 283-313 is disordered; that stretch reads QQHPSPGWRENSPEPSERLIQGSPGAEALPP.

Belongs to the H2.0 homeobox family.

It localises to the nucleus. This Bos taurus (Bovine) protein is Homeobox protein DBX2 (DBX2).